Here is a 688-residue protein sequence, read N- to C-terminus: Elongation factor G (688 aa).

The 275-residue stretch at 8-282 folds into the tr-type G domain; that stretch reads EKTRNIGIMA…AIIDYLPSPM (275 aa). GTP contacts are provided by residues 17–24, 81–85, and 135–138; these read AHIDAGKT, DTPGH, and NKMD.

The protein belongs to the TRAFAC class translation factor GTPase superfamily. Classic translation factor GTPase family. EF-G/EF-2 subfamily.

It is found in the cytoplasm. In terms of biological role, catalyzes the GTP-dependent ribosomal translocation step during translation elongation. During this step, the ribosome changes from the pre-translocational (PRE) to the post-translocational (POST) state as the newly formed A-site-bound peptidyl-tRNA and P-site-bound deacylated tRNA move to the P and E sites, respectively. Catalyzes the coordinated movement of the two tRNA molecules, the mRNA and conformational changes in the ribosome. This chain is Elongation factor G (fusA), found in Apple proliferation phytoplasma.